Consider the following 364-residue polypeptide: Medium-wave-sensitive opsin 1 (364 aa).

Residues 1–52 (MAQRWGPHALSGVQAQDAYEDSTQASLFTYTNSNNTRGPFEGPNYHIAPRWV) lie on the Extracellular side of the membrane. Residues 17-43 (DAYEDSTQASLFTYTNSNNTRGPFEGP) form a required for 11-cis-retinal regeneration region. Asn-34 is a glycosylation site (N-linked (GlcNAc...) asparagine). Residues 53–77 (YHLTSAWMTIVVIASIFTNGLVLVA) form a helical membrane-spanning segment. At 78–89 (TMRFKKLRHPLN) the chain is on the cytoplasmic side. Residues 90-115 (WILVNLAVADLAETVIASTISVVNQV) traverse the membrane as a helical segment. The Extracellular portion of the chain corresponds to 116 to 129 (YGYFVLGHPLCVVE). Cys-126 and Cys-203 are oxidised to a cystine. The chain crosses the membrane as a helical span at residues 130–149 (GYTVSLCGITGLWSLAIISW). Topologically, residues 150-168 (ERWLVVCKPFGNVRFDAKL) are cytoplasmic. A helical membrane pass occupies residues 169 to 192 (AIVGIVFSWVWSAVWTAPPIFGWS). At 193 to 218 (RYWPYGLKTSCGPDVFSGTSYPGVQS) the chain is on the extracellular side. Residues 219–246 (YMMVLMVTCCITPLSIIVLCYLHVWLAI) traverse the membrane as a helical segment. Residues 247-268 (RAVAKQQKESESTQKAEKEVTR) are Cytoplasmic-facing. Residues 269–292 (MVVVMVLAYCLCWGPYAFFACFAT) form a helical membrane-spanning segment. At 293-300 (ANPGYSFH) the chain is on the extracellular side. Residues 301-325 (PLVAALPAYFAKSATIYNPIIYVFM) traverse the membrane as a helical segment. The residue at position 312 (Lys-312) is an N6-(retinylidene)lysine. At 326 to 364 (NRQFRNCILQLFGKKVEDSSELSSTSRTEASSVSSVSPA) the chain is on the cytoplasmic side.

It belongs to the G-protein coupled receptor 1 family. Opsin subfamily. As to quaternary structure, monomer. Homodimer. Homotetramer. Post-translationally, O-glycosylated. In terms of processing, phosphorylated on some or all of the serine and threonine residues present in the C-terminal region. In terms of tissue distribution, expressed in cone photoreceptor cells.

The protein resides in the membrane. Functionally, visual pigments are the light-absorbing molecules that mediate vision. They consist of an apoprotein, opsin, covalently linked to cis-retinal. May increase spectral sensitivity in dim light. This chain is Medium-wave-sensitive opsin 1 (OPN1MW), found in Cavia porcellus (Guinea pig).